Consider the following 360-residue polypeptide: Phenylalanine--tRNA ligase alpha subunit (360 aa).

E260 is a binding site for Mg(2+).

The protein belongs to the class-II aminoacyl-tRNA synthetase family. Phe-tRNA synthetase alpha subunit type 1 subfamily. As to quaternary structure, tetramer of two alpha and two beta subunits. Mg(2+) serves as cofactor.

It is found in the cytoplasm. It catalyses the reaction tRNA(Phe) + L-phenylalanine + ATP = L-phenylalanyl-tRNA(Phe) + AMP + diphosphate + H(+). The protein is Phenylalanine--tRNA ligase alpha subunit of Cereibacter sphaeroides (strain ATCC 17029 / ATH 2.4.9) (Rhodobacter sphaeroides).